We begin with the raw amino-acid sequence, 547 residues long: MTIIITKIADKIIKSNRVKNTLQDIHIHSSNCGCHGSFKSNSVMNQTFSSFSSLTTEKNEQQQQQLFKQFSNSKPIPMGRKVELDTSKVIDSVYFGNTENNNYRTNKGNTDYAFEASANNIRFGSGVTYEVGYDLLDMNCRNVIVFTDNNLLKLVDTDKESAVAKCLYSLEKCGIKYTIYSDVSIEPTDTSFKDAISVMGKGRYDGVVAVGGGSVMDTAKAANLYNSYPPADNDFLAYINPPIGKGLLVPGPLKRPLIAIPTTCGTASETTGVCILDIKLGDGLSAKTGIASRHLKPILGLVDPDNLLTLPSNVAISSGFDQLCHALESFTAIPFNQRSPRPLAPNQRPSYQGANPVSDVWSLRSLEMLCKNIHRFVLNPNDDYARSQMMLAASYAGLGFGNSGVHACHGMSYSISSMVKDYKPEGYYGLKKNLIPHGQSVILSAPAVFKFTAPSNPERHLLLAKIMGADISNASESDAGVLLSNQIVKLMKLLNVPNGLQALGYKESDIDSLVKGTLPQHRVTKLMPKQATYDDLYKLFKDSMTIY.

The protein belongs to the iron-containing alcohol dehydrogenase family. Hydroxyacid-oxoacid transhydrogenase subfamily.

Its subcellular location is the mitochondrion. It catalyses the reaction (S)-3-hydroxybutanoate + 2-oxoglutarate = (R)-2-hydroxyglutarate + acetoacetate. It carries out the reaction 4-hydroxybutanoate + 2-oxoglutarate = (R)-2-hydroxyglutarate + succinate semialdehyde. In terms of biological role, catalyzes the cofactor-independent reversible oxidation of gamma-hydroxybutyrate (GHB) to succinic semialdehyde (SSA) coupled to reduction of 2-ketoglutarate (2-KG) to D-2-hydroxyglutarate (D-2-HG). L-3-hydroxybutyrate (L-3-OHB) is also a substrate for HOT when using 2-KG as hydrogen acceptor, resulting in the formation of D-2-HG. This chain is Probable hydroxyacid-oxoacid transhydrogenase, mitochondrial (adhfe1), found in Dictyostelium discoideum (Social amoeba).